Reading from the N-terminus, the 612-residue chain is Elongation factor 4 (612 aa).

Positions 11 to 193 (KHIRNFSIIA…KLVTDVPAPT (183 aa)) constitute a tr-type G domain. Residues 23 to 28 (DHGKST) and 140 to 143 (NKID) contribute to the GTP site.

The protein belongs to the TRAFAC class translation factor GTPase superfamily. Classic translation factor GTPase family. LepA subfamily.

It is found in the cell membrane. The enzyme catalyses GTP + H2O = GDP + phosphate + H(+). In terms of biological role, required for accurate and efficient protein synthesis under certain stress conditions. May act as a fidelity factor of the translation reaction, by catalyzing a one-codon backward translocation of tRNAs on improperly translocated ribosomes. Back-translocation proceeds from a post-translocation (POST) complex to a pre-translocation (PRE) complex, thus giving elongation factor G a second chance to translocate the tRNAs correctly. Binds to ribosomes in a GTP-dependent manner. This chain is Elongation factor 4, found in Latilactobacillus sakei subsp. sakei (strain 23K) (Lactobacillus sakei subsp. sakei).